Consider the following 360-residue polypeptide: Dihydroorotate dehydrogenase (quinone) (360 aa).

FMN contacts are provided by residues 66–70 (AGFDK) and T90. K70 serves as a coordination point for substrate. 115-119 (NRMGF) contributes to the substrate binding site. FMN is bound by residues N143 and N176. Residue N176 participates in substrate binding. S179 serves as the catalytic Nucleophile. N181 lines the substrate pocket. K212 and T240 together coordinate FMN. Substrate is bound at residue 241-242 (NT). FMN is bound by residues G264, G293, and 314–315 (YT).

It belongs to the dihydroorotate dehydrogenase family. Type 2 subfamily. As to quaternary structure, monomer. FMN is required as a cofactor.

It is found in the cell membrane. The enzyme catalyses (S)-dihydroorotate + a quinone = orotate + a quinol. It functions in the pathway pyrimidine metabolism; UMP biosynthesis via de novo pathway; orotate from (S)-dihydroorotate (quinone route): step 1/1. Functionally, catalyzes the conversion of dihydroorotate to orotate with quinone as electron acceptor. The sequence is that of Dihydroorotate dehydrogenase (quinone) from Mycobacterium ulcerans (strain Agy99).